A 395-amino-acid chain; its full sequence is S-adenosylmethionine synthase (395 aa).

H16 is an ATP binding site. D18 provides a ligand contact to Mg(2+). E44 contacts K(+). 2 residues coordinate L-methionine: E57 and Q100. Residues 100–110 (QSPDIAQGVDD) are flexible loop. ATP contacts are provided by residues 174-176 (DAK), 241-242 (RF), D250, 256-257 (RK), A273, and K277. D250 is an L-methionine binding site. Residue K281 coordinates L-methionine.

This sequence belongs to the AdoMet synthase family. Homotetramer; dimer of dimers. It depends on Mg(2+) as a cofactor. K(+) is required as a cofactor.

It is found in the cytoplasm. It catalyses the reaction L-methionine + ATP + H2O = S-adenosyl-L-methionine + phosphate + diphosphate. The protein operates within amino-acid biosynthesis; S-adenosyl-L-methionine biosynthesis; S-adenosyl-L-methionine from L-methionine: step 1/1. In terms of biological role, catalyzes the formation of S-adenosylmethionine (AdoMet) from methionine and ATP. The overall synthetic reaction is composed of two sequential steps, AdoMet formation and the subsequent tripolyphosphate hydrolysis which occurs prior to release of AdoMet from the enzyme. The polypeptide is S-adenosylmethionine synthase (Lactiplantibacillus plantarum (strain ATCC BAA-793 / NCIMB 8826 / WCFS1) (Lactobacillus plantarum)).